The following is a 264-amino-acid chain: ATP synthase subunit a (264 aa).

6 helical membrane passes run 29–49, 89–109, 134–154, 177–197, 208–228, and 235–255; these read TWHI…LWLF, VIAP…FMDM, DLNI…YYSI, IPVN…SLAL, LIFI…TLGV, and LIFH…LTIV.

Belongs to the ATPase A chain family. F-type ATPases have 2 components, CF(1) - the catalytic core - and CF(0) - the membrane proton channel. CF(1) has five subunits: alpha(3), beta(3), gamma(1), delta(1), epsilon(1). CF(0) has three main subunits: a(1), b(2) and c(9-12). The alpha and beta chains form an alternating ring which encloses part of the gamma chain. CF(1) is attached to CF(0) by a central stalk formed by the gamma and epsilon chains, while a peripheral stalk is formed by the delta and b chains.

The protein resides in the cell inner membrane. Key component of the proton channel; it plays a direct role in the translocation of protons across the membrane. This Shewanella woodyi (strain ATCC 51908 / MS32) protein is ATP synthase subunit a.